The following is a 222-amino-acid chain: Pyridoxine/pyridoxamine 5'-phosphate oxidase (222 aa).

Substrate is bound by residues 14-17 (RRNY) and Lys-71. FMN contacts are provided by residues 66–71 (RTVLLK), 81–82 (FT), Arg-87, Lys-88, and Gln-110. The substrate site is built by Tyr-128, Arg-132, and Ser-136. FMN contacts are provided by residues 145-146 (QS) and Trp-190. 196 to 198 (RLN) provides a ligand contact to substrate. Residue Arg-200 coordinates FMN.

It belongs to the pyridoxamine 5'-phosphate oxidase family. In terms of assembly, homodimer. It depends on FMN as a cofactor.

The enzyme catalyses pyridoxamine 5'-phosphate + O2 + H2O = pyridoxal 5'-phosphate + H2O2 + NH4(+). It catalyses the reaction pyridoxine 5'-phosphate + O2 = pyridoxal 5'-phosphate + H2O2. It functions in the pathway cofactor metabolism; pyridoxal 5'-phosphate salvage; pyridoxal 5'-phosphate from pyridoxamine 5'-phosphate: step 1/1. It participates in cofactor metabolism; pyridoxal 5'-phosphate salvage; pyridoxal 5'-phosphate from pyridoxine 5'-phosphate: step 1/1. Functionally, catalyzes the oxidation of either pyridoxine 5'-phosphate (PNP) or pyridoxamine 5'-phosphate (PMP) into pyridoxal 5'-phosphate (PLP). This chain is Pyridoxine/pyridoxamine 5'-phosphate oxidase, found in Prochlorococcus marinus (strain MIT 9303).